The chain runs to 427 residues: Phosphatidate cytidylyltransferase, mitochondrial (427 aa).

The segment covering 94–106 (YNRNGDGSTSTEN) has biased composition (polar residues). The disordered stretch occupies residues 94–113 (YNRNGDGSTSTENPSKKEEQ).

This sequence belongs to the TAM41 family. Requires Mg(2+) as cofactor.

Its subcellular location is the mitochondrion inner membrane. It catalyses the reaction a 1,2-diacyl-sn-glycero-3-phosphate + CTP + H(+) = a CDP-1,2-diacyl-sn-glycerol + diphosphate. Its pathway is phospholipid metabolism; CDP-diacylglycerol biosynthesis; CDP-diacylglycerol from sn-glycerol 3-phosphate: step 3/3. Its function is as follows. Catalyzes the formation of CDP-diacylglycerol (CDP-DAG) from phosphatidic acid (PA) in the mitochondrial inner membrane. Required for the biosynthesis of the dimeric phospholipid cardiolipin, which stabilizes supercomplexes of the mitochondrial respiratory chain in the mitochondrial inner membrane. In Dictyostelium discoideum (Social amoeba), this protein is Phosphatidate cytidylyltransferase, mitochondrial.